A 908-amino-acid chain; its full sequence is Serine/threonine-protein kinase WARTS homolog (908 aa).

Residues 42–70 (EIRVGRHRAKLDEIRESLKAYEHEAGLLS) adopt a coiled-coil conformation. Composition is skewed to low complexity over residues 115-125 (VSSAAVSNSNS) and 168-181 (PSTT…TTTE). Disordered stretches follow at residues 115 to 134 (VSSA…GGHK), 162 to 183 (MIRN…TEES), 203 to 225 (NNNA…DSSP), and 388 to 412 (KSRA…VSSP). Residues 392–404 (QPPPPQYNQPSEP) show a composition bias toward pro residues. A coiled-coil region spans residues 439 to 470 (YMEQHVERLLQQYKEREKRMKQLEKEMVSAQL). The Protein kinase domain maps to 502–807 (FTVISHIGVG…TAQVKNHPWF (306 aa)). ATP is bound by residues 508-516 (IGVGAFGKV) and K531. The active-site Proton acceptor is the D625. The region spanning 808-874 (RGIDWVNLRK…RHFFDTDSVG (67 aa)) is the AGC-kinase C-terminal domain.

Belongs to the protein kinase superfamily. AGC Ser/Thr protein kinase family. In terms of assembly, interacts (via N-terminus) with yap-1 (via WW domain). It depends on Mg(2+) as a cofactor. In terms of tissue distribution, expressed in muscles and epithelial tissues including pharynx, intestine and hypodermis. Expressed in vulval and spermathecal seam cells.

The protein localises to the cytoplasm. Its subcellular location is the apical cell membrane. The enzyme catalyses L-seryl-[protein] + ATP = O-phospho-L-seryl-[protein] + ADP + H(+). It catalyses the reaction L-threonyl-[protein] + ATP = O-phospho-L-threonyl-[protein] + ADP + H(+). Its function is as follows. Phosphorylates yap-1 which may negatively regulate yap-1 nuclear localization. Plays an essential role in larval development. Regulates growth, the formation of gut granules, lifespan and cell and body sizes probably in synergy with the TGF-beta sma/mab pathway. Does not appear to regulate apoptosis and proliferation. In addition, may synergize with the TGF-beta daf-7 dauer pathway to regulate entry into the dauer stage. Maintains the cellular integrity of intestinal cells by regulating the localization of apical actin and junctional proteins. The chain is Serine/threonine-protein kinase WARTS homolog from Caenorhabditis elegans.